Here is a 164-residue protein sequence, read N- to C-terminus: V-type proton ATPase subunit c' (164 aa).

Topologically, residues 1-15 (MTDDLVNEYAPAFAP) are lumenal. A helical transmembrane segment spans residues 16–36 (FFGFAGCAAAMILSSLGAAIG). The Cytoplasmic portion of the chain corresponds to 37–58 (TAKSGIGISGIGTFRPELIMKS). Residues 59–79 (LIPVVMSGILAVYGLVVAVLV) form a helical membrane-spanning segment. The Lumenal segment spans residues 80-97 (AGGLSPTEEYTLFNGFMH). Residues 98 to 118 (LAAGLCVGFACLSSGYAIGIV) form a helical membrane-spanning segment. The Cytoplasmic segment spans residues 119-135 (GDVGVRKFMHQPRLFVG). The chain crosses the membrane as a helical span at residues 136 to 156 (IVLILIFAEVLGLYGMIIALI). Residues 157–164 (LNTRGSGN) are Lumenal-facing.

The protein belongs to the V-ATPase proteolipid subunit family. In terms of assembly, V-ATPase is a heteromultimeric enzyme composed of a peripheral catalytic V1 complex (components A to H) attached to an integral membrane V0 proton pore complex (components: a, c, c', c'', d, e, f and VOA1). The decameric c-ring forms the proton-conducting pore, and is composed of eight proteolipid subunits c, one subunit c' and one subunit c''.

The protein resides in the vacuole membrane. Functionally, proton-conducting pore forming subunit of the V0 complex of vacuolar(H+)-ATPase (V-ATPase), a multisubunit enzyme composed of a peripheral complex (V1) that hydrolyzes ATP and a membrane integral complex (V0) that translocates protons. V-ATPase is responsible for acidifying and maintaining the pH of intracellular compartments. The polypeptide is V-type proton ATPase subunit c' (VMA11) (Eremothecium gossypii (strain ATCC 10895 / CBS 109.51 / FGSC 9923 / NRRL Y-1056) (Yeast)).